Here is a 186-residue protein sequence, read N- to C-terminus: Putative manganese efflux pump MntP (186 aa).

Helical transmembrane passes span 5-25 (VLIG…MDAF), 41-61 (VFQI…GGMI), 72-92 (ALAG…MIVA), 107-127 (FGLF…GLSL), 135-155 (ILTI…GLLL), and 166-186 (YSEA…LLPI).

The protein belongs to the MntP (TC 9.B.29) family.

It localises to the cell membrane. Probably functions as a manganese efflux pump. This is Putative manganese efflux pump MntP from Bacillus licheniformis (strain ATCC 14580 / DSM 13 / JCM 2505 / CCUG 7422 / NBRC 12200 / NCIMB 9375 / NCTC 10341 / NRRL NRS-1264 / Gibson 46).